Consider the following 99-residue polypeptide: Cytochrome c2 iso-1 (99 aa).

Cys10, Cys13, His14, and Met75 together coordinate heme c.

The protein belongs to the cytochrome c family. Binds 1 heme c group covalently per subunit.

In terms of biological role, cytochrome c2 is found mainly in purple, non-sulfur, photosynthetic bacteria where it functions as the electron donor to the oxidized bacteriochlorophyll in the photophosphorylation pathway. However, it may also have a role in the respiratory chain and is found in some non-photosynthetic bacteria. The protein is Cytochrome c2 iso-1 of Magnetospirillum fulvum (Rhodospirillum fulvum).